The sequence spans 289 residues: ATP synthase gamma chain (289 aa).

Belongs to the ATPase gamma chain family. As to quaternary structure, F-type ATPases have 2 components, CF(1) - the catalytic core - and CF(0) - the membrane proton channel. CF(1) has five subunits: alpha(3), beta(3), gamma(1), delta(1), epsilon(1). CF(0) has three main subunits: a, b and c.

It localises to the cell membrane. In terms of biological role, produces ATP from ADP in the presence of a proton gradient across the membrane. The gamma chain is believed to be important in regulating ATPase activity and the flow of protons through the CF(0) complex. The chain is ATP synthase gamma chain from Lawsonia intracellularis (strain PHE/MN1-00).